A 409-amino-acid polypeptide reads, in one-letter code: Argininosuccinate synthase (409 aa).

ATP is bound by residues 11-19 (AYSGGLDTS) and Ala-38. L-citrulline contacts are provided by Tyr-91 and Ser-96. An ATP-binding site is contributed by Gly-121. L-aspartate-binding residues include Thr-123, Asn-127, and Asp-128. L-citrulline is bound at residue Asn-127. Positions 131, 182, 191, 267, and 279 each coordinate L-citrulline.

It belongs to the argininosuccinate synthase family. Type 1 subfamily. Homotetramer.

The protein resides in the cytoplasm. The catalysed reaction is L-citrulline + L-aspartate + ATP = 2-(N(omega)-L-arginino)succinate + AMP + diphosphate + H(+). Its pathway is amino-acid biosynthesis; L-arginine biosynthesis; L-arginine from L-ornithine and carbamoyl phosphate: step 2/3. This Xanthobacter autotrophicus (strain ATCC BAA-1158 / Py2) protein is Argininosuccinate synthase.